The primary structure comprises 598 residues: MADKGTENFDLEGSSWYIVHEAECTDSIDTLEDLCDESDSNVSNLIDDDVVDQGNSLALYNAKITDDCDNAIAHLKRKYNKSPEQAVAELSPQLQAVKITPERNSKRRLFQEDSGIFEDEAENSLTQVESNSQTGGNSQDGGGDINLLLLQTSNRRATMLAKFKDWYGVSYNEITRVYKSDKSCSDNWVIVIFRAAVEVLESSKIVLQQHCTYIQVKIFGFSALYLLQFKSAKSRETVQKLMCSMLNIQEFQILTDPPKLRSVPTALYFYKQAMLTESFVFGQTPDWIAKQTLVSHQAATTAETFELSKMVQWAYDNNLLEECDIAYHYAMYADEDANAAAYLKSNNQVKHVRDCSTMVRMYKRYEMRDMSMSEWIYKCCDECTEEGDWKPISQFLKYQGVNILSFLIVLKSFLKGIPKKNCIVIHGPPDTGKSLFCYSLVKFLKGKVVSYVNRSSHFWLQPLMDCKVGFMDDATYVCWTYIDQNLRNALDGNPMCIDAKHRAPQQLKLPPMLITSNIDVKQEQSLMYLHSRVQCFSFPNKMPFLDDGSPMYTFTDATWKSFFQKLGRQLELTDPEEESNGVPSRAFRCTSRSNSDSY.

The Nuclear localization signal signature appears at 76–78; that stretch reads KRK. Ser82 and Ser91 each carry phosphoserine; by host. The short motif at 90–99 is the Nuclear export signal element; the sequence is LSPQLQAVKI. The segment at 138 to 302 is DNA-binding region; sequence SQDGGGDINL…LVSHQAATTA (165 aa). Residues 401–551 form the SF3 helicase domain; that stretch reads VNILSFLIVL…MPFLDDGSPM (151 aa). Residue 427–434 coordinates ATP; the sequence is GPPDTGKS. Lys508 is covalently cross-linked (Glycyl lysine isopeptide (Lys-Gly) (interchain with G-Cter in SUMO)). The interval 573-598 is disordered; it reads TDPEEESNGVPSRAFRCTSRSNSDSY.

This sequence belongs to the papillomaviridae E1 protein family. In terms of assembly, can form hexamers. Interacts with E2 protein; this interaction increases E1 DNA binding specificity. Interacts with host DNA polymerase subunit POLA2. Interacts with host single stranded DNA-binding protein RPA1. Interacts with host TOP1; this interaction stimulates the enzymatic activity of TOP1. Phosphorylated. Post-translationally, sumoylated.

It localises to the host nucleus. It catalyses the reaction Couples ATP hydrolysis with the unwinding of duplex DNA by translocating in the 3'-5' direction.. The enzyme catalyses ATP + H2O = ADP + phosphate + H(+). In terms of biological role, ATP-dependent DNA 3'-5' helicase required for initiation of viral DNA replication. It forms a complex with the viral E2 protein. The E1-E2 complex binds to the replication origin which contains binding sites for both proteins. During the initial step, a dimer of E1 interacts with a dimer of protein E2 leading to a complex that binds the viral origin of replication with high specificity. Then, a second dimer of E1 displaces the E2 dimer in an ATP-dependent manner to form the E1 tetramer. Following this, two E1 monomers are added to each half of the site, which results in the formation of two E1 trimers on the viral ori. Subsequently, two hexamers will be created. The double hexamer acts as a bi-directional helicase machinery and unwinds the viral DNA and then recruits the host DNA polymerase to start replication. The polypeptide is Replication protein E1 (Human papillomavirus 65).